A 543-amino-acid chain; its full sequence is MDDPNQCTIKQEDSITRPRPTEAPTIQNLKQEPAIEEGSSSTMDNMLMLTIDTNQANWQGTYDDDEMDLNNKTDLIPLLETEKTTINEDELYDDEEDDDDDEEIKKGIGFELLAQALGMSAKVPVEKEEPEKERAKLSGVGEFMKQIRGEIKPIQKERIVLDELGFRVRDPSKFPPCRIAEVQQTLTLADHQDGIDLPPPNAPTDVRIVRKLIRQKMVRCKKCKNRFIEKNIYERHLRDKHPDLYEEYIREQEEEVELQRLEEIEANRIEELQTGGFIPPENEISQPSEDPNYIPLPGENNGGLVPRFDYYGRIKQLKRPYKKKVSPQCPFCDKRFRNEFSLKKHFAKKHEEMVEFQQCLKCFKCVENDAEMANHDCELTYVCFECTPIRNLCTDNRLLNHRKKFHRGANSGFRCSFCNMKFLTPRKLRKHKKMSHVFTKTFQCHFCEEIFISEVAVMTHERMHTGIIKFECKVCDFRANRYTAMEEHKRDEHGYVCAICHERHAEYPEMKHHVYEEHGGYLAADEPTAYVETPRMWILYKGE.

A disordered region spans residues 1–38 (MDDPNQCTIKQEDSITRPRPTEAPTIQNLKQEPAIEEG). Over residues 10–20 (KQEDSITRPRP) the composition is skewed to basic and acidic residues. 7 C2H2-type zinc fingers span residues 218–241 (VRCK…RDKH), 327–350 (PQCP…AKKH), 381–406 (YVCF…KKFH), 413–436 (FRCS…KMSH), 442–464 (FQCH…ERMH), 470–493 (FECK…RDEH), and 495–518 (YVCA…YEEH).

The protein belongs to the krueppel C2H2-type zinc-finger protein family. Interacts with histone deacetylase hda-1. May interact with nasp-1.

It localises to the nucleus. Its function is as follows. Probable transcription factor. Promotes normal hermaphrodite (XX) development, in concert with histone deacetylase hda-1 and nasp-1, perhaps as components of a complex. May cooperate with transcription factor tra-1 to repress male-specific genes in hermaphrodites. Synthetic multivulva (synMuv) class B protein, required to repress the induction of vulval development by let-60 Ras signaling. The polypeptide is Zinc finger protein tra-4 (Caenorhabditis elegans).